The following is a 206-amino-acid chain: Small ribosomal subunit protein uS4 (206 aa).

In terms of domain architecture, S4 RNA-binding spans 96–156 (TRLDNVVYRM…EKSRTQARIK (61 aa)).

The protein belongs to the universal ribosomal protein uS4 family. In terms of assembly, part of the 30S ribosomal subunit. Contacts protein S5. The interaction surface between S4 and S5 is involved in control of translational fidelity.

In terms of biological role, one of the primary rRNA binding proteins, it binds directly to 16S rRNA where it nucleates assembly of the body of the 30S subunit. Functionally, with S5 and S12 plays an important role in translational accuracy. In Shewanella putrefaciens (strain CN-32 / ATCC BAA-453), this protein is Small ribosomal subunit protein uS4.